A 663-amino-acid chain; its full sequence is MSHQILLLLAMLTLGLAISQRREQVPCRTVNKEALCHGLGLLQVPSVLSLDIQALYLSGNQLQSILVSPLGFYTALRHLDLSDNQISFLQAGVFQALPYLEHLNLAHNRLATGMALNSGGLGRLPLLVSLDLSGNSLHGNLVERLLGETPRLRTLSLAENSLTRLARHTFWGMPAVEQLDLHSNVLMDIEDGAFEALPHLTHLNLSRNSLTCISDFSLQQLQVLDLSCNSIEAFQTAPEPQAQFQLAWLDLRENKLLHFPDLAVFPRLIYLNVSNNLIQLPAGLPRGSEDLHAPSEGWSASPLSNPSRNASTHPLSQLLNLDLSYNEIELVPASFLEHLTSLRFLNLSRNCLRSFEARQVDSLPCLVLLDLSHNVLEALELGTKVLGSLQTLLLQDNALQELPPYTFASLASLQRLNLQGNQVSPCGGPAEPGPPGCVDFSGIPTLHVLNMAGNSMGMLRAGSFLHTPLTELDLSTNPGLDVATGALVGLEASLEVLELQGNGLTVLRVDLPCFLRLKRLNLAENQLSHLPAWTRAVSLEVLDLRNNSFSLLPGNAMGGLETSLRRLYLQGNPLSCCGNGWLAAQLHQGRVDVDATQDLICRFGSQEELSLSLVRPEDCEKGGLKNVNLILLLSFTLVSAIVLTTLATICFLRRQKLSQQYKA.

The signal sequence occupies residues 1 to 17 (MSHQILLLLAMLTLGLA). Topologically, residues 18–628 (ISQRREQVPC…CEKGGLKNVN (611 aa)) are extracellular. One can recognise an LRRNT domain in the interval 22–49 (REQVPCRTVNKEALCHGLGLLQVPSVLS). 10 LRR repeats span residues 49–72 (SLDI…PLGF), 73–96 (YTAL…VFQA), 98–123 (PYLE…GLGR), 125–148 (PLLV…LLGE), 149–172 (TPRL…TFWG), 174–196 (PAVE…AFEA), 197–220 (LPHL…SLQQ), 222–241 (QVLD…PEPQ), 243–267 (QFQL…VFPR), and 269–287 (IYLN…LPRG). The N-linked (GlcNAc...) asparagine glycan is linked to asparagine 204. Residues asparagine 272, asparagine 305, and asparagine 309 are each glycosylated (N-linked (GlcNAc...) asparagine). A disordered region spans residues 291 to 311 (LHAPSEGWSASPLSNPSRNAS). Residues 301 to 311 (SPLSNPSRNAS) show a composition bias toward polar residues. LRR repeat units follow at residues 315–338 (LSQL…FLEH), 340–362 (TSLR…QVDS), 363–386 (LPCL…TKVL), 387–409 (GSLQ…TFAS), 411–433 (ASLQ…AEPG), 443–466 (IPTL…SFLH), 468–489 (PLTE…ALVG), 491–514 (EASL…LPCF), 515–539 (LRLK…AVSL), 541–559 (VLDL…AMGG), and 561–584 (ETSL…WLAA). The N-linked (GlcNAc...) asparagine glycan is linked to asparagine 346. Asparagine 546 carries an N-linked (GlcNAc...) asparagine glycan. The LRRCT domain maps to 572–621 (NPLSCCGNGWLAAQLHQGRVDVDATQDLICRFGSQEELSLSLVRPEDCEK). The helical transmembrane segment at 629–649 (LILLLSFTLVSAIVLTTLATI) threads the bilayer. The Cytoplasmic segment spans residues 650–663 (CFLRRQKLSQQYKA).

The protein belongs to the LRRC32/LRRC33 family. In terms of assembly, interacts with TGFB1; associates via disulfide bonds with the Latency-associated peptide chain (LAP) regulatory chain of TGFB1, leading to regulate activation of TGF-beta-1. Interacts with TGFB2. Interacts with TGFB3; associates via disulfide bonds with the Latency-associated peptide chain (LAP) regulatory chain of TGFB3, leading to regulate activation of TGF-beta-3. Interacts with LAPTM4B; decreases TGFB1 production in regulatory T-cells. As to expression, present in medial edge epithelial cells at 14.5 dpc (at protein level).

It localises to the cell membrane. The protein resides in the cell surface. In terms of biological role, key regulator of transforming growth factor beta (TGFB1, TGFB2 and TGFB3) that controls TGF-beta activation by maintaining it in a latent state during storage in extracellular space. Associates specifically via disulfide bonds with the Latency-associated peptide (LAP), which is the regulatory chain of TGF-beta, and regulates integrin-dependent activation of TGF-beta. Able to outcompete LTBP1 for binding to LAP regulatory chain of TGF-beta. Controls activation of TGF-beta-1 (TGFB1) on the surface of activated regulatory T-cells (Tregs). Required for epithelial fusion during palate development by regulating activation of TGF-beta-3 (TGFB3). The protein is Transforming growth factor beta activator LRRC32 of Mus musculus (Mouse).